Here is a 299-residue protein sequence, read N- to C-terminus: ATP phosphoribosyltransferase (299 aa).

Belongs to the ATP phosphoribosyltransferase family. Long subfamily. As to quaternary structure, equilibrium between an active dimeric form, an inactive hexameric form and higher aggregates. Interconversion between the various forms is largely reversible and is influenced by the natural substrates and inhibitors of the enzyme. Requires Mg(2+) as cofactor.

The protein resides in the cytoplasm. It catalyses the reaction 1-(5-phospho-beta-D-ribosyl)-ATP + diphosphate = 5-phospho-alpha-D-ribose 1-diphosphate + ATP. It functions in the pathway amino-acid biosynthesis; L-histidine biosynthesis; L-histidine from 5-phospho-alpha-D-ribose 1-diphosphate: step 1/9. With respect to regulation, feedback inhibited by histidine. Catalyzes the condensation of ATP and 5-phosphoribose 1-diphosphate to form N'-(5'-phosphoribosyl)-ATP (PR-ATP). Has a crucial role in the pathway because the rate of histidine biosynthesis seems to be controlled primarily by regulation of HisG enzymatic activity. This chain is ATP phosphoribosyltransferase, found in Pectobacterium atrosepticum (strain SCRI 1043 / ATCC BAA-672) (Erwinia carotovora subsp. atroseptica).